The chain runs to 1250 residues: DNA topoisomerase 3-alpha (1250 aa).

One can recognise a Toprim domain in the interval 27–171 (KYLNVAEKND…NISVYRATFS (145 aa)). The 422-residue stretch at 189-610 (DKRQSDAVDV…EQIAKYKQAY (422 aa)) folds into the Topo IA-type catalytic domain. Residue Tyr356 is the O-(5'-phospho-DNA)-tyrosine intermediate of the active site. A compositionally biased stretch (gly residues) spans 769–835 (RGGGGGPGPG…GTGGGGLGGG (67 aa)). Disordered regions lie at residues 769 to 899 (RGGG…GLDE) and 953 to 1035 (NGGT…TVLC). Residues 840–865 (PGGESKKSATKKPPNEPKPKKTKEPK) show a composition bias toward basic and acidic residues. The span at 866–886 (AAPNKKTSSKSSGSIRSFFTS) shows a compositional bias: low complexity. A compositionally biased stretch (polar residues) spans 956–965 (TMPTESNGDQ). Composition is skewed to basic and acidic residues over residues 966-994 (QLDKSLSEWIKEQDKADERPMLWGTRERA) and 1012-1021 (PRWDSVERDS). The span at 1022–1033 (TPPSSVPESETV) shows a compositional bias: low complexity. Positions 1035, 1038, 1061, and 1067 each coordinate Zn(2+). The GRF-type 1 zinc-finger motif lies at 1035 to 1076 (CTGCQQPARQNTVRKNGPNLGRLYYKCPKPDECNFFQWADEP). Residues 1069–1150 (FFQWADEPPS…TATPGDGEEV (82 aa)) form a disordered region. Residues 1079–1101 (SAKSKNSTGSAPQSTTSWGSNRV) are compositionally biased toward polar residues. A compositionally biased stretch (low complexity) spans 1106–1134 (SIQQSNSQRGQSSMRSNSSSTVTITQTKT). 4 residues coordinate Zn(2+): Cys1152, Cys1154, Cys1177, and Cys1184. The GRF-type 2 zinc finger occupies 1152-1193 (CNCGQLASQLTVRKDGPNQGRPFYACPTREKSCGFFKWGDED). Residues 1188–1231 (KWGDEDQNQGASSTSWGSANRNPPGRSQPTAITSDGPKTRRCGL) form a disordered region. The segment covering 1195–1220 (NQGASSTSWGSANRNPPGRSQPTAIT) has biased composition (polar residues).

It belongs to the type IA topoisomerase family.

The catalysed reaction is ATP-independent breakage of single-stranded DNA, followed by passage and rejoining.. Functionally, releases the supercoiling and torsional tension of DNA introduced during the DNA replication and transcription by transiently cleaving and rejoining one strand of the DNA duplex. Introduces a single-strand break via transesterification at a target site in duplex DNA. The scissile phosphodiester is attacked by the catalytic tyrosine of the enzyme, resulting in the formation of a DNA-(5'-phosphotyrosyl)-enzyme intermediate and the expulsion of a 3'-OH DNA strand. The free DNA strand than undergoes passage around the unbroken strand thus removing DNA supercoils. Finally, in the religation step, the DNA 3'-OH attacks the covalent intermediate to expel the active-site tyrosine and restore the DNA phosphodiester backbone. Weakly relaxes negative supercoils and displays a distinct preference for binding single-stranded DNA. This chain is DNA topoisomerase 3-alpha (Top3alpha), found in Drosophila melanogaster (Fruit fly).